Here is a 268-residue protein sequence, read N- to C-terminus: Interleukin-1 beta (268 aa).

Positions 1-116 are excised as a propeptide; it reads MATVPELTSE…TWDDYSLECD (116 aa).

This sequence belongs to the IL-1 family. In terms of assembly, monomer. In its precursor form, weakly interacts with full-length MEFV; the mature cytokine does not interact at all. Interacts with integrins ITGAV:ITGBV and ITGA5:ITGB1; integrin-binding is required for IL1B signaling. Interacts with cargo receptor TMED10; the interaction is direct and is required for the secretion of IL1B mature form. Interacts with HSP90AB1; the interaction facilitates cargo translocation into the ERGIC. Interacts with HSP90B1; the interaction facilitates cargo translocation into the ERGIC.

Its subcellular location is the cytoplasm. The protein localises to the cytosol. The protein resides in the secreted. It localises to the lysosome. It is found in the extracellular exosome. Functionally, potent pro-inflammatory cytokine. Initially discovered as the major endogenous pyrogen, induces prostaglandin synthesis, neutrophil influx and activation, T-cell activation and cytokine production, B-cell activation and antibody production, and fibroblast proliferation and collagen production. Promotes Th17 differentiation of T-cells. Synergizes with IL12/interleukin-12 to induce IFNG synthesis from T-helper 1 (Th1) cells. Plays a role in angiogenesis by inducing VEGF production synergistically with TNF and IL6. Involved in transduction of inflammation downstream of pyroptosis: its mature form is specifically released in the extracellular milieu by passing through the gasdermin-D (GSDMD) pore. This is Interleukin-1 beta (IL1B) from Oryctolagus cuniculus (Rabbit).